The chain runs to 488 residues: MKYRDLRDFISKLEADGELRRVDVEVDPRLEMTEVCDRTLRAEGPAILFQKPKGYRMPVLGNLFGTPRRVALGMGAEDVSALREIGELLAFLRQPEPPKGLRDAWSQLPVFRKVLDMGPKKVRRAACQEVVVEGDDVDLGRLPVQTCWPGDAGPLITWALVVTRGPEKERQNLGIYRNQVIGRNRTIMRWLAHRGGALDFRDWQRERPGEPFPVAIALGADPATILGAVTPVPDSLSEYGFAGLLRGSKTELVKCLGPDLQVPASAEIVLEGHIHPDDTAPEGPFGDHTGYYNEVDHFPVFTVDRITHRRDPIYHSTYTGRPPDEPAILGVALNEVFVPILRKQFPEISDFYLPPEGCSYRMAVVTMKKQYPGHAKRVMLGVWSFLRQFMYTKFVIVTDDDVNARDWKDVIWAMTTRMDPKRDTVMIDNTPIDYLDFASPVSGLGSKIGFDATHKWPGETDREWGRPIVMDDETRARVDALWPKLGLD.

Asparagine 172 contributes to the Mn(2+) binding site. Prenylated FMN contacts are provided by residues 175-177 (IYR), 189-191 (RWL), and 194-195 (RG). Glutamate 238 provides a ligand contact to Mn(2+). Aspartate 287 serves as the catalytic Proton donor.

Belongs to the UbiD family. In terms of assembly, homohexamer. It depends on prenylated FMN as a cofactor. Mn(2+) is required as a cofactor.

It localises to the cell membrane. The enzyme catalyses a 4-hydroxy-3-(all-trans-polyprenyl)benzoate + H(+) = a 2-(all-trans-polyprenyl)phenol + CO2. The protein operates within cofactor biosynthesis; ubiquinone biosynthesis. Functionally, catalyzes the decarboxylation of 3-octaprenyl-4-hydroxy benzoate to 2-octaprenylphenol, an intermediate step in ubiquinone biosynthesis. This Alkalilimnicola ehrlichii (strain ATCC BAA-1101 / DSM 17681 / MLHE-1) protein is 3-octaprenyl-4-hydroxybenzoate carboxy-lyase.